Reading from the N-terminus, the 366-residue chain is MTPEHLPTEQYEAQLAEKVARLQSMMAPFSGLVPEVFRSPVSHYRMRAEFRLWHDGDDLYHIMFDQQTKSRIRVDTFPAASQLINTLMKAMIAGVRDNHALRHKLFQMDYLTTLSNQAVVSLLYHKKLDEEWREAATALRDALRAQGLNVHLIGRATKTKIELDQDYIDERLPVAGKEMIYRQVENSFTQPNAAMNIQMLEWALEVTKDSKGDLLELYCGNGNFSLALARNFNRVLATEIAKPSVAAAQYNIAANHIDNVQIIRMAAEEFTQAMNGVREFNRLQGIDLKGYQCETIFVDPPRSGLDSETEKMVQAYPRILYISCNPETLCKNLETLSQTHTVSRLALFDQFPYTHHMECGVLLTAR.

Positions 190, 218, 223, 239, and 299 each coordinate S-adenosyl-L-methionine. Cysteine 324 serves as the catalytic Nucleophile. Residue glutamate 358 is the Proton acceptor of the active site.

It belongs to the class I-like SAM-binding methyltransferase superfamily. RNA M5U methyltransferase family. TrmA subfamily.

The enzyme catalyses uridine(54) in tRNA + S-adenosyl-L-methionine = 5-methyluridine(54) in tRNA + S-adenosyl-L-homocysteine + H(+). It carries out the reaction uridine(341) in tmRNA + S-adenosyl-L-methionine = 5-methyluridine(341) in tmRNA + S-adenosyl-L-homocysteine + H(+). Functionally, dual-specificity methyltransferase that catalyzes the formation of 5-methyluridine at position 54 (m5U54) in all tRNAs, and that of position 341 (m5U341) in tmRNA (transfer-mRNA). The sequence is that of tRNA/tmRNA (uracil-C(5))-methyltransferase from Salmonella heidelberg (strain SL476).